We begin with the raw amino-acid sequence, 255 residues long: Bouquet formation protein 3 (255 aa).

Helical transmembrane passes span 13 to 33 (IKVSIYLFLHTLTYGLLNYHL), 48 to 68 (IPYWMSYLSIIMHVGQSLLLQ), 72 to 94 (LGYGWLLLTKYPVYVLLSTYYLT), 99 to 116 (IAWAFIIDAISLLVARCF), 132 to 152 (YSVSFLFTIMASVLISVLNYI), 172 to 192 (SLVAPPLPLQYLAHVPIGYVI), 205 to 225 (SLFLMIFLTLWNCFIPYSILF), and 235 to 255 (VVGAYLSQIWIITFICWALSL).

It localises to the endoplasmic reticulum membrane. The protein resides in the nucleus inner membrane. Functionally, connects telomeres to the nuclear envelop (NE) during both vegetative growth and meiosis. This connection ensures clustering of telomeres to the spindle pole body (SPB) when cells enter meiotic prophase. In Schizosaccharomyces pombe (strain 972 / ATCC 24843) (Fission yeast), this protein is Bouquet formation protein 3 (bqt3).